Consider the following 156-residue polypeptide: Transmembrane protein 50 homolog (156 aa).

The next 4 helical transmembrane spans lie at 5-25 (IMKYLPALAGIIFTAGWFLWI), 45-65 (IQWIYYLPGIFATLGMVMANI), 87-107 (VWLFISFAISFGCIGAALWIM), and 124-144 (PGIAITLQTSLIFLSSLLLVF).

This sequence belongs to the UPF0220 family.

It localises to the membrane. The protein is Transmembrane protein 50 homolog (tmem50) of Dictyostelium discoideum (Social amoeba).